The sequence spans 75 residues: Putative snRNP Sm-like protein (75 aa).

The Sm domain occupies 4-75 (RPLDVIHRSL…NVLAISPTEE (72 aa)).

It belongs to the snRNP Sm proteins family.

The chain is Putative snRNP Sm-like protein from Pyrococcus abyssi (strain GE5 / Orsay).